The following is a 656-amino-acid chain: DNA ligase (656 aa).

NAD(+) is bound by residues 32–36 (DAVYD) and 81–82 (SL). Lysine 112 serves as the catalytic N6-AMP-lysine intermediate. Positions 133, 167, and 306 each coordinate NAD(+). Zn(2+) contacts are provided by cysteine 400, cysteine 403, cysteine 416, and cysteine 421. Positions 577-656 (KSSSVFNNKT…ELLKRLKELD (80 aa)) constitute a BRCT domain.

This sequence belongs to the NAD-dependent DNA ligase family. LigA subfamily. Requires Mg(2+) as cofactor. Mn(2+) is required as a cofactor.

It catalyses the reaction NAD(+) + (deoxyribonucleotide)n-3'-hydroxyl + 5'-phospho-(deoxyribonucleotide)m = (deoxyribonucleotide)n+m + AMP + beta-nicotinamide D-nucleotide.. Functionally, DNA ligase that catalyzes the formation of phosphodiester linkages between 5'-phosphoryl and 3'-hydroxyl groups in double-stranded DNA using NAD as a coenzyme and as the energy source for the reaction. It is essential for DNA replication and repair of damaged DNA. This chain is DNA ligase, found in Helicobacter pylori (strain P12).